The primary structure comprises 158 residues: Pleckstrin homology domain-containing family J member 1 (158 aa).

Residues 15 to 108 (PTQRAAELGM…WIDAIIKASY (94 aa)) enclose the PH domain.

The sequence is that of Pleckstrin homology domain-containing family J member 1 (plekhj1) from Danio rerio (Zebrafish).